Here is a 307-residue protein sequence, read N- to C-terminus: Protein pxr1 (307 aa).

Residues 1–11 (MGLAAPRKKTK) show a composition bias toward basic residues. Disordered regions lie at residues 1–25 (MGLA…SRST) and 144–234 (NATA…SDCD). Residues 15–25 (DPNNTSWSRST) show a composition bias toward polar residues. Residues 25 to 79 (TDGFGHRILKAQGWTPGGFLGARNATHSDLFTTASASHIRVVLKDDTLGLGARPK) enclose the G-patch domain. Basic and acidic residues-rich tracts occupy residues 154–168 (LRVD…HESE) and 206–221 (GKEL…EKKQ).

This sequence belongs to the PINX1 family.

The protein resides in the nucleus. The protein localises to the nucleolus. Functionally, involved in rRNA-processing at A0, A1 and A2 sites and negatively regulates telomerase. This Neosartorya fischeri (strain ATCC 1020 / DSM 3700 / CBS 544.65 / FGSC A1164 / JCM 1740 / NRRL 181 / WB 181) (Aspergillus fischerianus) protein is Protein pxr1 (pxr1).